The primary structure comprises 200 residues: High mobility group protein B3 (200 aa).

N6-acetyllysine is present on lysine 3. 2 consecutive DNA-binding regions (HMG box) follow at residues 9 to 79 (PKGK…KDYG) and 93 to 161 (PKRP…ADYK). At cysteine 23 the chain carries Cysteine sulfonic acid (-SO3H); alternate. Cysteine 23 and cysteine 45 form a disulfide bridge. N6-acetyllysine is present on residues lysine 30 and lysine 43. Cysteine 45 bears the Cysteine sulfonic acid (-SO3H); alternate mark. Residues 71–97 (YDREMKDYGPAKGGKKKKDPNAPKRPP) form a disordered region. The residue at position 98 (serine 98) is a Phosphoserine. Cysteine 104 bears the Cysteine sulfonic acid (-SO3H) mark. N6-acetyllysine is present on residues lysine 112 and lysine 139. The tract at residues 163 to 200 (KGKFDGAKGAAKVARKKVEEEDEEDEEEEEEEEEEEDE) is disordered. Positions 182–200 (EEDEEDEEEEEEEEEEEDE) are enriched in acidic residues.

Belongs to the HMGB family. Post-translationally, reduction/oxidation of cysteine residues Cys-23, Cys-45 and Cys-104 and a possible intramolecular disulfide bond involving Cys-23 and Cys-45 give rise to different redox forms with specific functional activities in various cellular compartments: 1- fully reduced HMGB3 (HMGB3C23hC45hC104h), 2- disulfide HMGB3 (HMGB3C23-C45C104h) and 3- sulfonyl HMGB3 (HMGB3C23soC45soC104so).

It is found in the nucleus. The protein localises to the chromosome. The protein resides in the cytoplasm. Functionally, multifunctional protein with various roles in different cellular compartments. May act in a redox sensitive manner. Associates with chromatin and binds DNA with a preference for non-canonical DNA structures such as single-stranded DNA. Can bend DNA and enhance DNA flexibility by looping thus providing a mechanism to promote activities on various gene promoters. Proposed to be involved in the innate immune response to nucleic acids by acting as a cytoplasmic promiscuous immunogenic DNA/RNA sensor. Negatively regulates B-cell and myeloid cell differentiation. In hematopoietic stem cells may regulate the balance between self-renewal and differentiation. Involved in negative regulation of canonical Wnt signaling. In Bos taurus (Bovine), this protein is High mobility group protein B3 (HMGB3).